A 362-amino-acid chain; its full sequence is Putative G-protein coupled receptor B0244.5 (362 aa).

At 1–47 (MQNIFENCSYHSKYEPYFLNCTNTTNQCVLIQDVGIIQAIDFWANLC) the chain is on the extracellular side. N-linked (GlcNAc...) asparagine glycosylation is found at asparagine 7, asparagine 20, and asparagine 23. Residues 48–68 (IPFTLFVIAFILNGYYLSILI) form a helical membrane-spanning segment. Topologically, residues 69–81 (PEFRKMNDTTKKQ) are cytoplasmic. The helical transmembrane segment at 82-102 (YIFVVSRGISSLSASSIMMVL) threads the bilayer. The Extracellular segment spans residues 103–125 (RLLKMLSTSFTVYFLFFLIDDLS). A helical membrane pass occupies residues 126–145 (FYSLLGSYVGSTLLLYLATV). At 146–161 (RPIFYSIQISVRIVYK) the chain is on the cytoplasmic side. A helical membrane pass occupies residues 162–182 (FALVNVLLAVVLAVTTAIFQA). Residues 183-204 (AEVSDGFFHCDVQHCQPIINIA) lie on the Extracellular side of the membrane. A helical membrane pass occupies residues 205 to 225 (MFVIIATSFLIPIITLTFVLV). At 226 to 255 (TLCFQKSRTQSIGNFTVDNSVYKSARTRLA) the chain is on the cytoplasmic side. Residues 256 to 276 (WTLFTFTLISLTEMIPSSFLV) form a helical membrane-spanning segment. Topologically, residues 277 to 295 (NLRVEDTITICVNFYQADH) are extracellular. The chain crosses the membrane as a helical span at residues 296 to 316 (LFIPAIMNSFQTLAWGIALIV). Over 317 to 362 (DPLCALLFDPRIRKVWVEHVSRLSIIIGRSFEACCHSNLNKEIQDK) the chain is Cytoplasmic.

It belongs to the G-protein coupled receptor 1 family. B0244 subfamily.

The protein resides in the cell membrane. This Caenorhabditis elegans protein is Putative G-protein coupled receptor B0244.5.